Here is a 287-residue protein sequence, read N- to C-terminus: 4-hydroxybenzoate octaprenyltransferase (287 aa).

A run of 7 helical transmembrane segments spans residues 30 to 50 (ALWIASDGHPAPSLVVIFALG), 92 to 112 (IAIAVGLALVSFLLILPLNGL), 133 to 153 (FFAIPQAYLGIAFGFGIPMAF), 158 to 178 (DTVPMIAWAMLAANVFWSVAY), 207 to 227 (VLAIMLCYAAMLGIYVWLGAA), 232 to 252 (WPYWAGWAAAAGCSIYHYTLI), and 266 to 286 (HNNWLGGVLFAGIAAHYALAV).

It belongs to the UbiA prenyltransferase family. Mg(2+) is required as a cofactor.

It is found in the cell inner membrane. It carries out the reaction all-trans-octaprenyl diphosphate + 4-hydroxybenzoate = 4-hydroxy-3-(all-trans-octaprenyl)benzoate + diphosphate. The protein operates within cofactor biosynthesis; ubiquinone biosynthesis. Catalyzes the prenylation of para-hydroxybenzoate (PHB) with an all-trans polyprenyl group. Mediates the second step in the final reaction sequence of ubiquinone-8 (UQ-8) biosynthesis, which is the condensation of the polyisoprenoid side chain with PHB, generating the first membrane-bound Q intermediate 3-octaprenyl-4-hydroxybenzoate. This chain is 4-hydroxybenzoate octaprenyltransferase, found in Burkholderia mallei (strain NCTC 10247).